We begin with the raw amino-acid sequence, 568 residues long: MFS-type efflux transporter phmH (568 aa).

Residues 1–11 are compositionally biased toward polar residues; that stretch reads MVSGTDTTEVG. A disordered region spans residues 1–39; it reads MVSGTDTTEVGATTKAPPSEGTEGILDDHSSNSQPQAEK. Transmembrane regions (helical) follow at residues 45–65, 101–121, 134–154, 161–181, 199–219, 237–257, and 268–288; these read YPLS…VSAL, YVMI…GGSS, GIGA…LVPM, IGLL…VGGI, IFYI…LFLH, VIGN…LTYG, and IAAP…WEMS. N-linked (GlcNAc...) asparagine glycosylation occurs at N303. Transmembrane regions (helical) follow at residues 307 to 327, 344 to 364, 372 to 392, 399 to 419, 437 to 457, and 515 to 535; these read AAAF…NFFY, VYTL…GAIV, TVHL…SILD, EWVI…STTL, TWSF…AAIF, and IGIV…EIHL. The N-linked (GlcNAc...) asparagine glycan is linked to N563.

This sequence belongs to the major facilitator superfamily.

It localises to the cell membrane. Its function is as follows. MFS-type efflux transporter; part of the gene cluster that mediates the biosynthesis of thethe mycotoxins phomacins, leucine-derived cytochalasans with potent actin polymerization-inhibitory activities and monocot-specific antigerminative activities. PhmH might be involved in the excretion of phomacins. The polypeptide is MFS-type efflux transporter phmH (Phaeosphaeria nodorum (strain SN15 / ATCC MYA-4574 / FGSC 10173) (Glume blotch fungus)).